Consider the following 402-residue polypeptide: S-adenosylmethionine synthase (402 aa).

Residue 137–142 (GQGSAD) coordinates ATP.

It belongs to the AdoMet synthase 2 family. Mg(2+) is required as a cofactor.

The catalysed reaction is L-methionine + ATP + H2O = S-adenosyl-L-methionine + phosphate + diphosphate. It functions in the pathway amino-acid biosynthesis; S-adenosyl-L-methionine biosynthesis; S-adenosyl-L-methionine from L-methionine: step 1/1. Functionally, catalyzes the formation of S-adenosylmethionine from methionine and ATP. The protein is S-adenosylmethionine synthase of Pyrobaculum neutrophilum (strain DSM 2338 / JCM 9278 / NBRC 100436 / V24Sta) (Thermoproteus neutrophilus).